A 34-amino-acid chain; its full sequence is Photosystem II reaction center protein M (34 aa).

The helical transmembrane segment at 5-25 (ILAFIATALFILVPTAFLLII) threads the bilayer.

This sequence belongs to the PsbM family. As to quaternary structure, PSII is composed of 1 copy each of membrane proteins PsbA, PsbB, PsbC, PsbD, PsbE, PsbF, PsbH, PsbI, PsbJ, PsbK, PsbL, PsbM, PsbT, PsbX, PsbY, PsbZ, Psb30/Ycf12, at least 3 peripheral proteins of the oxygen-evolving complex and a large number of cofactors. It forms dimeric complexes.

It is found in the plastid. The protein localises to the chloroplast thylakoid membrane. Functionally, one of the components of the core complex of photosystem II (PSII). PSII is a light-driven water:plastoquinone oxidoreductase that uses light energy to abstract electrons from H(2)O, generating O(2) and a proton gradient subsequently used for ATP formation. It consists of a core antenna complex that captures photons, and an electron transfer chain that converts photonic excitation into a charge separation. This subunit is found at the monomer-monomer interface. The chain is Photosystem II reaction center protein M from Cucumis sativus (Cucumber).